A 429-amino-acid polypeptide reads, in one-letter code: Adenylosuccinate synthetase (429 aa).

Residues 12–18 and 40–42 contribute to the GTP site; these read GDEGKGK and GHT. The Proton acceptor role is filled by Asp-13. Residues Asp-13 and Gly-40 each coordinate Mg(2+). IMP is bound by residues 13–16, 38–41, Thr-128, Arg-142, Gln-223, Thr-238, and Arg-302; these read DEGK and NAGH. His-41 serves as the catalytic Proton donor. 298–304 serves as a coordination point for substrate; sequence VNTGRPR. GTP contacts are provided by residues Arg-304, 330-332, and 412-414; these read KLD and GVG.

It belongs to the adenylosuccinate synthetase family. In terms of assembly, homodimer. The cofactor is Mg(2+).

It is found in the cytoplasm. It catalyses the reaction IMP + L-aspartate + GTP = N(6)-(1,2-dicarboxyethyl)-AMP + GDP + phosphate + 2 H(+). It participates in purine metabolism; AMP biosynthesis via de novo pathway; AMP from IMP: step 1/2. In terms of biological role, plays an important role in the de novo pathway of purine nucleotide biosynthesis. Catalyzes the first committed step in the biosynthesis of AMP from IMP. This Pseudarthrobacter chlorophenolicus (strain ATCC 700700 / DSM 12829 / CIP 107037 / JCM 12360 / KCTC 9906 / NCIMB 13794 / A6) (Arthrobacter chlorophenolicus) protein is Adenylosuccinate synthetase.